Reading from the N-terminus, the 422-residue chain is Serine--tRNA ligase (422 aa).

229-231 (TAE) serves as a coordination point for L-serine. Residue 260–262 (RAE) participates in ATP binding. Residue glutamate 283 coordinates L-serine. 347–350 (EISS) serves as a coordination point for ATP. Serine 383 is a binding site for L-serine.

It belongs to the class-II aminoacyl-tRNA synthetase family. Type-1 seryl-tRNA synthetase subfamily. As to quaternary structure, homodimer. The tRNA molecule binds across the dimer.

The protein localises to the cytoplasm. It carries out the reaction tRNA(Ser) + L-serine + ATP = L-seryl-tRNA(Ser) + AMP + diphosphate + H(+). The enzyme catalyses tRNA(Sec) + L-serine + ATP = L-seryl-tRNA(Sec) + AMP + diphosphate + H(+). The protein operates within aminoacyl-tRNA biosynthesis; selenocysteinyl-tRNA(Sec) biosynthesis; L-seryl-tRNA(Sec) from L-serine and tRNA(Sec): step 1/1. Functionally, catalyzes the attachment of serine to tRNA(Ser). Is also able to aminoacylate tRNA(Sec) with serine, to form the misacylated tRNA L-seryl-tRNA(Sec), which will be further converted into selenocysteinyl-tRNA(Sec). The protein is Serine--tRNA ligase of Heliobacterium modesticaldum (strain ATCC 51547 / Ice1).